We begin with the raw amino-acid sequence, 262 residues long: Glucosamine-6-phosphate deaminase (262 aa).

The active-site Proton acceptor; for enolization step is Asp-63. Residue Asn-129 is the For ring-opening step of the active site. His-131 acts as the Proton acceptor; for ring-opening step in catalysis. Glu-136 functions as the For ring-opening step in the catalytic mechanism.

The protein belongs to the glucosamine/galactosamine-6-phosphate isomerase family. NagB subfamily.

The catalysed reaction is alpha-D-glucosamine 6-phosphate + H2O = beta-D-fructose 6-phosphate + NH4(+). It participates in amino-sugar metabolism; N-acetylneuraminate degradation; D-fructose 6-phosphate from N-acetylneuraminate: step 5/5. Its function is as follows. Catalyzes the reversible isomerization-deamination of glucosamine 6-phosphate (GlcN6P) to form fructose 6-phosphate (Fru6P) and ammonium ion. This is Glucosamine-6-phosphate deaminase from Bacillus cytotoxicus (strain DSM 22905 / CIP 110041 / 391-98 / NVH 391-98).